Consider the following 506-residue polypeptide: Protein MGF 505-9R (506 aa).

This sequence belongs to the asfivirus MGF 505 family.

Plays a role in virus cell tropism, and may be required for efficient virus replication in macrophages. This African swine fever virus (isolate Tick/South Africa/Pretoriuskop Pr4/1996) (ASFV) protein is Protein MGF 505-9R.